Reading from the N-terminus, the 215-residue chain is Ribonuclease HII (215 aa).

The RNase H type-2 domain occupies 24–215 (GVVFGVDEVG…PIRQFYENVD (192 aa)). A divalent metal cation contacts are provided by Asp30, Glu31, and Asp125.

This sequence belongs to the RNase HII family. The cofactor is Mn(2+). Mg(2+) is required as a cofactor.

It localises to the cytoplasm. It catalyses the reaction Endonucleolytic cleavage to 5'-phosphomonoester.. Its function is as follows. Endonuclease that specifically degrades the RNA of RNA-DNA hybrids. The sequence is that of Ribonuclease HII from Zymomonas mobilis subsp. mobilis (strain ATCC 31821 / ZM4 / CP4).